The chain runs to 109 residues: Large ribosomal subunit protein uL24 (109 aa).

The protein belongs to the universal ribosomal protein uL24 family. In terms of assembly, part of the 50S ribosomal subunit.

Functionally, one of two assembly initiator proteins, it binds directly to the 5'-end of the 23S rRNA, where it nucleates assembly of the 50S subunit. Its function is as follows. One of the proteins that surrounds the polypeptide exit tunnel on the outside of the subunit. In Rickettsia africae (strain ESF-5), this protein is Large ribosomal subunit protein uL24.